A 319-amino-acid chain; its full sequence is V-set and transmembrane domain-containing protein 4 (319 aa).

The N-terminal stretch at 1-23 (MRLRLLALAAAVLLGPAPEVCGA) is a signal peptide. The Ig-like domain occupies 24-154 (LNVTVSPGPV…SSATEMRVIS (131 aa)). N-linked (GlcNAc...) asparagine glycans are attached at residues Asn-25 and Asn-41. A disulfide bridge connects residues Cys-46 and Cys-126. N-linked (GlcNAc...) asparagine glycosylation is present at Asn-143. Residues 180–200 (AVLVCCVGILSVLLFTLVIAW) traverse the membrane as a helical segment.

Proteolytically cleaved to generate a bioactive peptide. In terms of tissue distribution, peptide Lv is widely expressed in various tissues and the central nervous system, including the retinal photoreceptor layer, hippocampus, olfactory bulb, and cerebellum.

It localises to the cell membrane. Its subcellular location is the secreted. Peptide Lv enhances L-type voltage-gated calcium channel (L-VGCC) currents in retinal photoreceptors. This is V-set and transmembrane domain-containing protein 4 (Vstm4) from Mus musculus (Mouse).